The primary structure comprises 481 residues: Ribulose bisphosphate carboxylase large chain (481 aa).

A propeptide spanning residues 1 to 2 (MS) is cleaved from the precursor. P3 carries the N-acetylproline modification. N6,N6,N6-trimethyllysine is present on K14. Substrate is bound by residues N123 and T173. The active-site Proton acceptor is the K175. A substrate-binding site is contributed by K177. Positions 201, 203, and 204 each coordinate Mg(2+). Residue K201 is modified to N6-carboxylysine. The active-site Proton acceptor is H294. R295, H327, and S379 together coordinate substrate.

The protein belongs to the RuBisCO large chain family. Type I subfamily. In terms of assembly, heterohexadecamer of 8 large chains and 8 small chains; disulfide-linked. The disulfide link is formed within the large subunit homodimers. It depends on Mg(2+) as a cofactor. Post-translationally, the disulfide bond which can form in the large chain dimeric partners within the hexadecamer appears to be associated with oxidative stress and protein turnover.

The protein resides in the plastid. The enzyme catalyses 2 (2R)-3-phosphoglycerate + 2 H(+) = D-ribulose 1,5-bisphosphate + CO2 + H2O. It catalyses the reaction D-ribulose 1,5-bisphosphate + O2 = 2-phosphoglycolate + (2R)-3-phosphoglycerate + 2 H(+). Its function is as follows. RuBisCO catalyzes two reactions: the carboxylation of D-ribulose 1,5-bisphosphate, the primary event in carbon dioxide fixation, as well as the oxidative fragmentation of the pentose substrate in the photorespiration process. Both reactions occur simultaneously and in competition at the same active site. The chain is Ribulose bisphosphate carboxylase large chain from Cuscuta sandwichiana (Kauna'oa).